Here is a 316-residue protein sequence, read N- to C-terminus: Phospholipase A1 4 (316 aa).

The signal sequence occupies residues Ala-1–Leu-4. Residues Thr-5–Arg-14 constitute a propeptide that is removed on maturation. Cys-20 and Cys-103 are disulfide-bonded. Catalysis depends on Ser-153, which acts as the Nucleophile. The Charge relay system role is filled by Asp-181. 2 cysteine pairs are disulfide-bonded: Cys-192-Cys-197 and Cys-235-Cys-240. Residue His-242 is the Charge relay system of the active site. 3 disulfides stabilise this stretch: Cys-257–Cys-284, Cys-258–Cys-309, and Cys-277–Cys-282.

It belongs to the AB hydrolase superfamily. Lipase family. In terms of tissue distribution, expressed by the venom gland.

The protein localises to the secreted. It catalyses the reaction a 1,2-diacyl-sn-glycero-3-phosphocholine + H2O = a 2-acyl-sn-glycero-3-phosphocholine + a fatty acid + H(+). Its function is as follows. Catalyzes the hydrolysis of phosphatidylcholine with phospholipase A1 activity. May act as an allergen and induce hemolytic activity. The chain is Phospholipase A1 4 from Polistes dominula (European paper wasp).